A 331-amino-acid chain; its full sequence is L-lactate dehydrogenase A chain (331 aa).

NAD(+) is bound by residues 29–57 (GMVG…MEDK) and arginine 98. Residues arginine 105, asparagine 137, and arginine 168 each contribute to the substrate site. Position 137 (asparagine 137) interacts with NAD(+). Histidine 192 (proton acceptor) is an active-site residue. Threonine 247 is a substrate binding site.

Belongs to the LDH/MDH superfamily. LDH family. As to quaternary structure, homotetramer.

Its subcellular location is the cytoplasm. The catalysed reaction is (S)-lactate + NAD(+) = pyruvate + NADH + H(+). It functions in the pathway fermentation; pyruvate fermentation to lactate; (S)-lactate from pyruvate: step 1/1. Its function is as follows. Interconverts simultaneously and stereospecifically pyruvate and lactate with concomitant interconversion of NADH and NAD(+). The sequence is that of L-lactate dehydrogenase A chain (ldha) from Dissostichus mawsoni (Antarctic cod).